Reading from the N-terminus, the 568-residue chain is Protein OCTOPUS-like (568 aa).

7 disordered regions span residues 1–27 (MNLS…RLST), 78–99 (LFKP…RPGF), 168–203 (EEAE…ELKP), 242–276 (QKQK…PRFS), 360–428 (PGGS…DKKS), 446–512 (DDEE…SKDG), and 526–558 (RSWK…SHGH). A compositionally biased stretch (low complexity) spans 82–93 (SSSGTNNSNGNG). The span at 168–179 (EEAEIEEDEENG) shows a compositional bias: acidic residues. Over residues 180–193 (EKDPGEIVEEKSSE) the composition is skewed to basic and acidic residues. At Ser260 the chain carries Phosphoserine. Residues 400–423 (SVSNSTTTIDSNSMETAENKGNQN) show a composition bias toward polar residues. Over residues 532 to 546 (GGSGGGGGGGGGGGW) the composition is skewed to gly residues.

The protein belongs to the OCTOPUS family. Post-translationally, phosphorylation at Ser-260 amplifies the promotion of protophloem differentiation.

The protein localises to the cell membrane. It is found in the cytoplasm. In terms of biological role, potentiates primary root protophloem differentiation. Regulates roots architecture. The chain is Protein OCTOPUS-like from Arabidopsis thaliana (Mouse-ear cress).